We begin with the raw amino-acid sequence, 48 residues long: Protein TUNAR (48 aa).

The disordered stretch occupies residues 1–20 (MVITSENDEDRGGQEKESKE). The segment covering 10-20 (DRGGQEKESKE) has biased composition (basic and acidic residues). Residues 24-44 (LAMLGIIGTILNLIVIIFVYI) traverse the membrane as a helical segment.

In terms of assembly, interacts with ATPase ATP2A2/SERCA2. Interacts with ATPase ATP2A3/SERCA3; the interaction occurs at low levels in low glucose conditions and is increased by high glucose levels. As to expression, highly expressed in pancreatic islets where it is enriched in the insulin-producing beta cells.

The protein resides in the endoplasmic reticulum membrane. It is found in the extracellular vesicle membrane. In terms of biological role, in neurons, plays a role in the regulation of intracellular Ca(2+), possibly by acting as an activator of ATP2A2/SERCA2, thus increasing the efficiency with which Ca(2+) is removed from the cytoplasm. Inhibits differentiation of embryonic stem cells into neurons and inhibits neurite outgrowth, likely as a result of its role in intracellular Ca(2+) regulation. In pancreatic beta cells, lowers Ca(2+) levels in the endoplasmic reticulum and enhances glucose-stimulated insulin secretion. In Homo sapiens (Human), this protein is Protein TUNAR.